A 262-amino-acid chain; its full sequence is Ninja-family protein 2 (262 aa).

Residues 49–70 (RNSLACNTSKEAAGQSPKEMNA) form a disordered region.

Belongs to the Ninja family.

The protein resides in the nucleus. In Zea mays (Maize), this protein is Ninja-family protein 2.